A 100-amino-acid chain; its full sequence is uncharacterized protein (100 aa).

This is an uncharacterized protein from Rickettsia prowazekii (strain Madrid E).